The following is a 548-amino-acid chain: Folylpolyglutamate synthase (548 aa).

ATP is bound at residue 130-133; sequence GKGS. Residues S157, E234, and H262 each contribute to the Mg(2+) site. 2 residues coordinate ATP: R382 and D396.

This sequence belongs to the folylpolyglutamate synthase family. A monovalent cation serves as cofactor.

It is found in the mitochondrion inner membrane. It localises to the mitochondrion matrix. The protein resides in the cytoplasm. The enzyme catalyses (6S)-5,6,7,8-tetrahydrofolyl-(gamma-L-Glu)(n) + L-glutamate + ATP = (6S)-5,6,7,8-tetrahydrofolyl-(gamma-L-Glu)(n+1) + ADP + phosphate + H(+). Its pathway is cofactor biosynthesis; tetrahydrofolylpolyglutamate biosynthesis. Functionally, catalyzes conversion of folates to polyglutamate derivatives allowing concentration of folate compounds in the cell and the intracellular retention of these cofactors, which are important substrates for most of the folate-dependent enzymes that are involved in one-carbon transfer reactions involved in purine, pyrimidine and amino acid synthesis. Required for methionine synthesis and maintenance of intact mitochondrial DNA. Involved in telomere maintenance. This Saccharomyces cerevisiae (strain RM11-1a) (Baker's yeast) protein is Folylpolyglutamate synthase.